A 205-amino-acid chain; its full sequence is Probable GTP-binding protein EngB (205 aa).

Residues 22–195 (NLPEVALVGR…LDLLDYFWNG (174 aa)) form the EngB-type G domain. GTP contacts are provided by residues 30–37 (GRSNVGKS), 57–61 (GKTQT), 75–78 (DLPG), 142–145 (TKAD), and 174–176 (FSA). The Mg(2+) site is built by S37 and T59.

Belongs to the TRAFAC class TrmE-Era-EngA-EngB-Septin-like GTPase superfamily. EngB GTPase family. Mg(2+) is required as a cofactor.

In terms of biological role, necessary for normal cell division and for the maintenance of normal septation. In Heliobacterium modesticaldum (strain ATCC 51547 / Ice1), this protein is Probable GTP-binding protein EngB.